We begin with the raw amino-acid sequence, 562 residues long: Probable sesquiterpene synthase (562 aa).

3 residues coordinate Mg(2+): Asp315, Asp319, and Glu467. Positions 315-319 (DDIYD) match the DDXXD motif motif.

It belongs to the terpene synthase family. Tpsa subfamily. Mg(2+) serves as cofactor. It depends on Mn(2+) as a cofactor.

Functionally, sesquiterpene synthase. The protein is Probable sesquiterpene synthase (SesquiTPS) of Santalum austrocaledonicum (Sandalwood).